The primary structure comprises 329 residues: Endochitinase A (329 aa).

The first 23 residues, 1–23 (MRLCKFTALSSLLFSLLLLSASA), serve as a signal peptide directing secretion. Residues 24-65 (EQCGSQAGGARCPSGLCCSKFGWCGNTNDYCGPGNCQSQCPG) enclose the Chitin-binding type-1 domain. Cystine bridges form between C26–C41, C35–C47, C40–C54, and C59–C63. P67 carries the 4-hydroxyproline; partial modification. 4 positions are modified to 4-hydroxyproline: P69, P71, P72, and P74. A 4-hydroxyproline; partial modification is found at P75. Cystine bridges form between C101/C163, C175/C183, and C282/C314. Catalysis depends on E145, which acts as the Proton donor. Residues 323–329 (GLLVDTM) constitute a propeptide, removed in mature form.

The protein belongs to the glycosyl hydrolase 19 family. Chitinase class I subfamily. In terms of processing, the 4-hydroxyproline residues are not glycosylated in this plant vacuolar protein.

It is found in the vacuole. The catalysed reaction is Random endo-hydrolysis of N-acetyl-beta-D-glucosaminide (1-&gt;4)-beta-linkages in chitin and chitodextrins.. Its function is as follows. Defense against chitin-containing fungal pathogens. The sequence is that of Endochitinase A (CHN48) from Nicotiana tabacum (Common tobacco).